We begin with the raw amino-acid sequence, 380 residues long: MTPTMRKFHPLLKFINYSFIDLPTPSNISASWNFGSLLGLCLIAQIATGLFLAMHYTADTSLAFSSIAHICRDVNNGWLLRNLHANGASFFFICIYFHIGRGLYYGSYLYKETWNIGVILLFLLMATAFVGYVLPWGQMSFWGATVITNLLSAAPYIGSNLVQWIWGGFSVDNATLTRFFTFHFILPFIITAVSLIHLLFLHQTGSSNPTGLNSNLDKVSFHPYFSYKDLLGFVIMLGALASLSTFAPNLLGDPDNFTPANPLVTPPHIKPEWYLLFAYAILRSIPNKLGGVLAVVLSIMVLFLMPIIHTSKLRSLMFRPIAKTFFWALIANTAILTWIGGQPVEDPFITIGQIASGLYFLIFVLLIPSLGLLENKLLKI.

4 consecutive transmembrane segments (helical) span residues 34-54, 78-99, 114-134, and 179-199; these read FGSL…FLAM, WLLR…YFHI, WNIG…GYVL, and FFTF…IHLL. Heme b is bound by residues histidine 84 and histidine 98. Residues histidine 183 and histidine 197 each contribute to the heme b site. Residue histidine 202 participates in a ubiquinone binding. 4 helical membrane passes run 227–247, 289–309, 321–341, and 348–368; these read YKDL…STFA, LGGV…PIIH, IAKT…WIGG, and FITI…LLIP.

It belongs to the cytochrome b family. In terms of assembly, the cytochrome bc1 complex contains 3 respiratory subunits (MT-CYB, CYC1 and UQCRFS1), 2 core proteins (UQCRC1 and UQCRC2) and probably 6 low-molecular weight proteins. Heme b is required as a cofactor.

It localises to the mitochondrion inner membrane. Functionally, component of the ubiquinol-cytochrome c reductase complex (complex III or cytochrome b-c1 complex) that is part of the mitochondrial respiratory chain. The b-c1 complex mediates electron transfer from ubiquinol to cytochrome c. Contributes to the generation of a proton gradient across the mitochondrial membrane that is then used for ATP synthesis. This is Cytochrome b (mt-cyb) from Rana amurensis (Siberian wood frog).